Here is a 210-residue protein sequence, read N- to C-terminus: Prolactin (210 aa).

Residues 1-23 (MTQGSRLYFAVAVLMCGFVSING) form the signal peptide. Cystine bridges form between Cys69–Cys183 and Cys200–Cys210.

The protein belongs to the somatotropin/prolactin family. In terms of tissue distribution, pituitary gland.

The protein resides in the secreted. This is Prolactin (prl1) from Carassius auratus (Goldfish).